Here is an 892-residue protein sequence, read N- to C-terminus: MTDVTLKALAAERQVSVDRLVQQFADAGIRKSADDSVSAQEKQTLLAHLNREAVSGPDKLTLQRKTRSTLNIPGTGGKSKSVQIEVRKKRTFVKRDPQEAERLAAEEQAQREAEEQARREAEEQAKREAQQKAEREAAEQAKREAAEKAKREAAEKDKVSNQQTDDMIKTAQAEKARRENEAAELKRKAEEEARRKLEEEARRVAEEARRMAEENKWTATPEPVEDTSDYHVTTSQHARQAEDENDREVEGGRGRGRNAKAARPAKKGKHAESKADREEARAAVRGGKGGKRKGSSLQQGFQKPAQAVNRDVVIGETITVGELANKMAVKGSQVIKAMMKLGAMATINQVIDQETAQLVAEEMGHKVILRRENELEEAVMSDRDTGAAAEPRAPVVTIMGHVDHGKTSLLDYIRSTKVASGEAGGITQHIGAYHVETDNGMITFLDTPGHAAFTSMRARGAQATDIVVLVVAADDGVMPQTIEAIQHAKAAGVPVVVAVNKIDKPEADPDRVKNELSQYGILPEEWGGESQFVHVSAKAGTGIDELLDAILLQAEVLELKAVRKGMASGAVIESFLDKGRGPVATVLVREGTLHKGDIVLCGFEYGRVRAMRNELGQEVLEAGPSIPVEILGLSGVPAAGDEVTVVRDEKKAREVALYRQGKFREVKLARQQKSKLENMFANMTEGEVHEVNIVLKADVQGSVEAISDSLLKLSTDEVKVKIIGSGVGGITETDATLAAASNAILVGFNVRADASARKVIESESLDLRYYSVIYNLIDEVKAAMSGMLSPELKQQIIGLAEVRDVFKSPKFGAIAGCMVTEGTIKRHNPIRVLRDNVVIYEGELESLRRFKDDVNEVRNGMECGIGVKNYNDVRVGDMIEVFEIIEIQRTIA.

Residues 88 to 306 are disordered; it reads KKRTFVKRDP…LQQGFQKPAQ (219 aa). Composition is skewed to basic and acidic residues over residues 93–159 and 166–216; these read VKRD…KDKV and DMIK…EENK. Residues 254–269 are compositionally biased toward basic residues; sequence GRGRNAKAARPAKKGK. Basic and acidic residues predominate over residues 270 to 282; the sequence is HAESKADREEARA. Positions 391–560 constitute a tr-type G domain; that stretch reads PRAPVVTIMG…LLQAEVLELK (170 aa). The tract at residues 400–407 is G1; sequence GHVDHGKT. A GTP-binding site is contributed by 400–407; it reads GHVDHGKT. The segment at 425–429 is G2; it reads GITQH. Positions 446–449 are G3; that stretch reads DTPG. Residues 446–450 and 500–503 each bind GTP; these read DTPGH and NKID. The segment at 500–503 is G4; the sequence is NKID. Positions 536 to 538 are G5; that stretch reads SAK.

It belongs to the TRAFAC class translation factor GTPase superfamily. Classic translation factor GTPase family. IF-2 subfamily.

The protein localises to the cytoplasm. Its function is as follows. One of the essential components for the initiation of protein synthesis. Protects formylmethionyl-tRNA from spontaneous hydrolysis and promotes its binding to the 30S ribosomal subunits. Also involved in the hydrolysis of GTP during the formation of the 70S ribosomal complex. The polypeptide is Translation initiation factor IF-2 (Salmonella schwarzengrund (strain CVM19633)).